The primary structure comprises 666 residues: uncharacterized protein (666 aa).

This sequence belongs to the MG032/MG096/MG288 family.

This is an uncharacterized protein from Mycoplasma pneumoniae (strain ATCC 29342 / M129 / Subtype 1) (Mycoplasmoides pneumoniae).